The chain runs to 327 residues: tRNA dimethylallyltransferase (327 aa).

14–21 (GPTASGKT) provides a ligand contact to ATP. 16 to 21 (TASGKT) contacts substrate. Interaction with substrate tRNA regions lie at residues 39–42 (DSAL) and 163–167 (QRIQR).

Belongs to the IPP transferase family. In terms of assembly, monomer. It depends on Mg(2+) as a cofactor.

The catalysed reaction is adenosine(37) in tRNA + dimethylallyl diphosphate = N(6)-dimethylallyladenosine(37) in tRNA + diphosphate. Its function is as follows. Catalyzes the transfer of a dimethylallyl group onto the adenine at position 37 in tRNAs that read codons beginning with uridine, leading to the formation of N6-(dimethylallyl)adenosine (i(6)A). The chain is tRNA dimethylallyltransferase from Xanthomonas euvesicatoria pv. vesicatoria (strain 85-10) (Xanthomonas campestris pv. vesicatoria).